The following is a 300-amino-acid chain: C-5 sterol desaturase (300 aa).

4 helical membrane passes run 3–23, 68–88, 91–111, and 147–167; these read DPVL…WTAA, SLAL…QLSA, WYTW…YHRI, and ILMW…FCSW. The Fatty acid hydroxylase domain maps to 94 to 227; that stretch reads WVIAIVGVDL…LIIWDRLFGS (134 aa).

The protein belongs to the sterol desaturase family.

It localises to the cell membrane. The sequence is that of C-5 sterol desaturase (erg3) from Mycobacterium bovis (strain ATCC BAA-935 / AF2122/97).